The primary structure comprises 110 residues: MSMTDLLSAEDIKKAIGAFTAADSFDHKKFFQMVGLKKKSADDVKKVFHILDKDKSGFIEEDELGSILKGFSSDARDLSAKETKTLMAAGDKDGDGKIGVEEFSTLVAES.

Serine 2 carries the N-acetylserine modification. Serine 2, serine 8, and serine 24 each carry phosphoserine. EF-hand domains lie at 39–74 (KSAD…FSSD) and 78–110 (LSAK…VAES). Positions 52, 54, 56, 58, 60, and 63 each coordinate Ca(2+). The residue at position 66 (serine 66) is a Phosphoserine. Ca(2+) contacts are provided by aspartate 91, aspartate 93, aspartate 95, lysine 97, and glutamate 102.

Functionally, in muscle, parvalbumin is thought to be involved in relaxation after contraction. It binds two calcium ions. The sequence is that of Parvalbumin alpha (Pvalb) from Rattus norvegicus (Rat).